Here is a 376-residue protein sequence, read N- to C-terminus: N-acetyldiaminopimelate deacetylase (376 aa).

The active site involves D69. Catalysis depends on E128, which acts as the Proton acceptor.

It belongs to the peptidase M20A family. N-acetyldiaminopimelate deacetylase subfamily.

The catalysed reaction is N-acetyl-(2S,6S)-2,6-diaminopimelate + H2O = (2S,6S)-2,6-diaminopimelate + acetate. Its pathway is amino-acid biosynthesis; L-lysine biosynthesis via DAP pathway; LL-2,6-diaminopimelate from (S)-tetrahydrodipicolinate (acetylase route): step 3/3. Its function is as follows. Catalyzes the conversion of N-acetyl-diaminopimelate to diaminopimelate and acetate. In Streptococcus pneumoniae (strain 70585), this protein is N-acetyldiaminopimelate deacetylase.